Reading from the N-terminus, the 427-residue chain is Glutamate-1-semialdehyde 2,1-aminomutase (427 aa).

K265 is modified (N6-(pyridoxal phosphate)lysine).

It belongs to the class-III pyridoxal-phosphate-dependent aminotransferase family. HemL subfamily. In terms of assembly, homodimer. Pyridoxal 5'-phosphate is required as a cofactor.

It localises to the cytoplasm. The enzyme catalyses (S)-4-amino-5-oxopentanoate = 5-aminolevulinate. The protein operates within porphyrin-containing compound metabolism; protoporphyrin-IX biosynthesis; 5-aminolevulinate from L-glutamyl-tRNA(Glu): step 2/2. In Bordetella bronchiseptica (strain ATCC BAA-588 / NCTC 13252 / RB50) (Alcaligenes bronchisepticus), this protein is Glutamate-1-semialdehyde 2,1-aminomutase.